The chain runs to 270 residues: Phosphate import ATP-binding protein PstB 2 (270 aa).

One can recognise an ABC transporter domain in the interval leucine 25–isoleucine 265. An ATP-binding site is contributed by glycine 57–serine 64.

This sequence belongs to the ABC transporter superfamily. Phosphate importer (TC 3.A.1.7) family. As to quaternary structure, the complex is composed of two ATP-binding proteins (PstB), two transmembrane proteins (PstC and PstA) and a solute-binding protein (PstS).

It localises to the cell membrane. The catalysed reaction is phosphate(out) + ATP + H2O = ADP + 2 phosphate(in) + H(+). Functionally, part of the ABC transporter complex PstSACB involved in phosphate import. Responsible for energy coupling to the transport system. In Shouchella clausii (strain KSM-K16) (Alkalihalobacillus clausii), this protein is Phosphate import ATP-binding protein PstB 2.